A 294-amino-acid polypeptide reads, in one-letter code: Uracil-DNA glycosylase (294 aa).

D139 acts as the Proton acceptor in catalysis.

Belongs to the uracil-DNA glycosylase (UDG) superfamily. UNG family.

It is found in the host nucleus. It catalyses the reaction Hydrolyzes single-stranded DNA or mismatched double-stranded DNA and polynucleotides, releasing free uracil.. Functionally, excises uracil residues from the DNA which can arise as a result of misincorporation of dUMP residues by DNA polymerase or deamination of cytosines. Therefore may reduce deleterious uracil incorporation into the viral genome, particularly in terminally differentiated cells which lack DNA repair enzymes. The polypeptide is Uracil-DNA glycosylase (UL2) (Human herpesvirus 2 (strain 333) (HHV-2)).